The chain runs to 364 residues: Alanine racemase (364 aa).

Lysine 35 serves as the catalytic Proton acceptor; specific for D-alanine. Lysine 35 is subject to N6-(pyridoxal phosphate)lysine. Arginine 132 provides a ligand contact to substrate. Tyrosine 260 (proton acceptor; specific for L-alanine) is an active-site residue. Position 308 (methionine 308) interacts with substrate.

The protein belongs to the alanine racemase family. Pyridoxal 5'-phosphate is required as a cofactor.

It catalyses the reaction L-alanine = D-alanine. It participates in amino-acid biosynthesis; D-alanine biosynthesis; D-alanine from L-alanine: step 1/1. Functionally, catalyzes the interconversion of L-alanine and D-alanine. May also act on other amino acids. The sequence is that of Alanine racemase (alr) from Acidithiobacillus ferrooxidans (strain ATCC 23270 / DSM 14882 / CIP 104768 / NCIMB 8455) (Ferrobacillus ferrooxidans (strain ATCC 23270)).